The following is a 250-amino-acid chain: 1-(5-phosphoribosyl)-5-[(5-phosphoribosylamino)methylideneamino] imidazole-4-carboxamide isomerase (250 aa).

Catalysis depends on Asp-10, which acts as the Proton acceptor. Catalysis depends on Asp-131, which acts as the Proton donor.

It belongs to the HisA/HisF family.

The protein localises to the cytoplasm. The catalysed reaction is 1-(5-phospho-beta-D-ribosyl)-5-[(5-phospho-beta-D-ribosylamino)methylideneamino]imidazole-4-carboxamide = 5-[(5-phospho-1-deoxy-D-ribulos-1-ylimino)methylamino]-1-(5-phospho-beta-D-ribosyl)imidazole-4-carboxamide. It participates in amino-acid biosynthesis; L-histidine biosynthesis; L-histidine from 5-phospho-alpha-D-ribose 1-diphosphate: step 4/9. This Desulfitobacterium hafniense (strain DSM 10664 / DCB-2) protein is 1-(5-phosphoribosyl)-5-[(5-phosphoribosylamino)methylideneamino] imidazole-4-carboxamide isomerase.